We begin with the raw amino-acid sequence, 590 residues long: Myo-inositol transporter 3 (590 aa).

Residues 1-26 (MRTTHIEDRDNNSLENKHTDHIEGVE) are compositionally biased toward basic and acidic residues. The interval 1–40 (MRTTHIEDRDNNSLENKHTDHIEGVENGKGTQEPPSPSGF) is disordered. Topologically, residues 1–57 (MRTTHIEDRDNNSLENKHTDHIEGVENGKGTQEPPSPSGFGGHLIDENLVHVEGEDK) are cytoplasmic. Residues 58–78 (VTWYLCFLISASAIAGFLFGY) traverse the membrane as a helical segment. Residues 79-105 (DTGVVGVALPLVGTDLGGNELNSSQQE) lie on the Extracellular side of the membrane. Residue asparagine 100 is glycosylated (N-linked (GlcNAc...) asparagine). Residues 106–126 (IITAGTTIGAIFGSAILGGWG) form a helical membrane-spanning segment. Residues 127–132 (DHLGRK) are Cytoplasmic-facing. Residues 133 to 153 (MAILISDVFFTVGAVIIASSY) traverse the membrane as a helical segment. Residues 154-157 (SVPQ) lie on the Extracellular side of the membrane. Residues 158-178 (IIVGRIVLGVGVGGAAVIAPL) form a helical membrane-spanning segment. The Cytoplasmic segment spans residues 179 to 192 (FITETAPTAVRGRC). A helical transmembrane segment spans residues 193 to 213 (IGVNAFFIPFGQLVADSIGAG). Topologically, residues 214-222 (VQNMHGGWR) are extracellular. The helical transmembrane segment at 223–243 (LLFALGAVPSLIQLLLFHYLP) threads the bilayer. Residues 244-325 (ESPRILIVKG…AVSVLQAAGQ (82 aa)) are Cytoplasmic-facing. A helical transmembrane segment spans residues 326-346 (LCGFNTLLYYAGTLFGLLGLS). The Extracellular segment spans residues 347–349 (NPA). A helical transmembrane segment spans residues 350 to 370 (LGGLIPAGTNAVFVLIGMSTV). The Cytoplasmic portion of the chain corresponds to 371–376 (DKIGRR). A helical transmembrane segment spans residues 377–397 (GLLLVGVPVLLLGLVWNIIGF). The Extracellular segment spans residues 398–420 (YYMCKPTGGFLDTSYSYDTTNVG). Residues 421-441 (IVIGGIVFYVAGFGLTYSHLV) traverse the membrane as a helical segment. Over 442-455 (WYQAEYLALEVRSM) the chain is Cytoplasmic. A helical membrane pass occupies residues 456-476 (GSGVATTVCWIANLVVSVSYL). The Extracellular portion of the chain corresponds to 477 to 485 (SELETMTPS). The chain crosses the membrane as a helical span at residues 486-506 (GTYGFYLGLSVIAFVFVVFCF). The Cytoplasmic portion of the chain corresponds to 507 to 590 (PETKQLSIDE…GGKRKPQVLV (84 aa)).

Belongs to the major facilitator superfamily. Sugar transporter (TC 2.A.1.1) family.

It localises to the cell membrane. It catalyses the reaction myo-inositol(out) + H(+)(out) = myo-inositol(in) + H(+)(in). Transporter for myo-inositol. This is Myo-inositol transporter 3 from Cryptococcus neoformans var. grubii serotype A (strain H99 / ATCC 208821 / CBS 10515 / FGSC 9487) (Filobasidiella neoformans var. grubii).